Consider the following 114-residue polypeptide: Fluoride-specific ion channel FluC 2 (114 aa).

The next 3 membrane-spanning stretches (helical) occupy residues 30-50 (FPVATFLVNVAGCLILGLLSG), 57-77 (TFALLGTGFCGGLTTYSTFAV), and 88-108 (ALPSVVYVVASVAAGLAAAWL). Residues glycine 67 and threonine 70 each contribute to the Na(+) site.

Belongs to the fluoride channel Fluc/FEX (TC 1.A.43) family.

The protein localises to the cell membrane. It carries out the reaction fluoride(in) = fluoride(out). Its activity is regulated as follows. Na(+) is not transported, but it plays an essential structural role and its presence is essential for fluoride channel function. In terms of biological role, fluoride-specific ion channel. Important for reducing fluoride concentration in the cell, thus reducing its toxicity. The protein is Fluoride-specific ion channel FluC 2 of Rhodococcus jostii (strain RHA1).